A 339-amino-acid polypeptide reads, in one-letter code: Protein pelota homolog (339 aa).

This sequence belongs to the eukaryotic release factor 1 family. Pelota subfamily. In terms of assembly, monomer. The cofactor is a divalent metal cation.

The protein resides in the cytoplasm. May function in recognizing stalled ribosomes, interact with stem-loop structures in stalled mRNA molecules, and effect endonucleolytic cleavage of the mRNA. May play a role in the release non-functional ribosomes and degradation of damaged mRNAs. Has endoribonuclease activity. This is Protein pelota homolog (pelA) from Thermoplasma acidophilum (strain ATCC 25905 / DSM 1728 / JCM 9062 / NBRC 15155 / AMRC-C165).